Reading from the N-terminus, the 1755-residue chain is Transposon Ty1-OR Gag-Pol polyprotein (1755 aa).

Composition is skewed to polar residues over residues 1 to 10 (MESQQLSNYP), 48 to 60 (TKANSQQTTTPAS), and 127 to 152 (QSQFPQYPSSVGTPLSTPSPESGNTF). Disordered regions lie at residues 1–93 (MESQ…MMTQ), 126–173 (PQSQ…RPPP), and 352–421 (GSRN…SKST). A compositionally biased stretch (low complexity) spans 153-165 (TDSSSADSDMTST). The tract at residues 299-401 (NNGIHINNKV…NSKSKTARAH (103 aa)) is RNA-binding. Over residues 402 to 418 (NVSTSNNSPSTDNDSIS) the composition is skewed to low complexity. Ser-416 is modified (phosphoserine). Asp-461 acts as the For protease activity; shared with dimeric partner in catalysis. The interval 583–640 (NVHTSESTRKYPYPFIHRMLAHANAQTIRYSLKNNTITYFNESDVDWSSAIDYQCPDC) is integrase-type zinc finger-like. One can recognise an Integrase catalytic domain in the interval 660–835 (NSYEPFQYLH…AGLDISTLLP (176 aa)). Positions 671 and 736 each coordinate Mg(2+). 3 disordered regions span residues 956 to 1087 (SKAV…ETEK), 1092 to 1111 (RSPSIDASPPENNSSHNIVP), and 1130 to 1187 (DLPL…DNET). Over residues 960–969 (SPTDSTPPST) the composition is skewed to low complexity. Over residues 1005–1015 (STPQISNIEST) the composition is skewed to polar residues. Over residues 1038–1053 (ESSHASKSKDFRHSDS) the composition is skewed to basic and acidic residues. 2 stretches are compositionally biased toward polar residues: residues 1054–1082 (YSENETNHTNVPISSTGGTNNKTVPQISD) and 1101–1111 (PENNSSHNIVP). The Bipartite nuclear localization signal motif lies at 1178 to 1212 (KKRSLEDNETEIKVSRDTWNTKNMRSLEPPRSKKR). Residues 1338–1476 (NNYYITQLDI…DILGLEIKYQ (139 aa)) enclose the Reverse transcriptase Ty1/copia-type domain. Mg(2+)-binding residues include Asp-1346, Asp-1427, Asp-1428, Asp-1610, Glu-1652, and Asp-1685. Residues 1610 to 1752 (DASYGNQPYY…IKTFKLLTNK (143 aa)) form the RNase H Ty1/copia-type domain.

The capsid protein forms a homotrimer, from which the VLPs are assembled. The protease is a homodimer, whose active site consists of two apposed aspartic acid residues. Post-translationally, initially, virus-like particles (VLPs) are composed of the structural unprocessed proteins Gag and Gag-Pol, and also contain the host initiator methionine tRNA (tRNA(i)-Met) which serves as a primer for minus-strand DNA synthesis, and a dimer of genomic Ty RNA. Processing of the polyproteins occurs within the particle and proceeds by an ordered pathway, called maturation. First, the protease (PR) is released by autocatalytic cleavage of the Gag-Pol polyprotein yielding capsid protein p45 and a Pol-p154 precursor protein. This cleavage is a prerequisite for subsequent processing of Pol-p154 at the remaining sites to release the mature structural and catalytic proteins. Maturation takes place prior to the RT reaction and is required to produce transposition-competent VLPs.

It localises to the cytoplasm. Its subcellular location is the nucleus. It carries out the reaction DNA(n) + a 2'-deoxyribonucleoside 5'-triphosphate = DNA(n+1) + diphosphate. It catalyses the reaction Endonucleolytic cleavage to 5'-phosphomonoester.. In terms of biological role, capsid protein (CA) is the structural component of the virus-like particle (VLP), forming the shell that encapsulates the retrotransposons dimeric RNA genome. The particles are assembled from trimer-clustered units and there are holes in the capsid shells that allow for the diffusion of macromolecules. CA also has nucleocapsid-like chaperone activity, promoting primer tRNA(i)-Met annealing to the multipartite primer-binding site (PBS), dimerization of Ty1 RNA and initiation of reverse transcription. The aspartyl protease (PR) mediates the proteolytic cleavages of the Gag and Gag-Pol polyproteins after assembly of the VLP. Its function is as follows. Reverse transcriptase/ribonuclease H (RT) is a multifunctional enzyme that catalyzes the conversion of the retro-elements RNA genome into dsDNA within the VLP. The enzyme displays a DNA polymerase activity that can copy either DNA or RNA templates, and a ribonuclease H (RNase H) activity that cleaves the RNA strand of RNA-DNA heteroduplexes during plus-strand synthesis and hydrolyzes RNA primers. The conversion leads to a linear dsDNA copy of the retrotransposon that includes long terminal repeats (LTRs) at both ends. Functionally, integrase (IN) targets the VLP to the nucleus, where a subparticle preintegration complex (PIC) containing at least integrase and the newly synthesized dsDNA copy of the retrotransposon must transit the nuclear membrane. Once in the nucleus, integrase performs the integration of the dsDNA into the host genome. The chain is Transposon Ty1-OR Gag-Pol polyprotein (TY1B-OR) from Saccharomyces cerevisiae (strain ATCC 204508 / S288c) (Baker's yeast).